The primary structure comprises 212 residues: Thymidine kinase (212 aa).

Residues 16 to 23 (GPMFSGKS) and 99 to 102 (DEAQ) each bind ATP. E100 serves as the catalytic Proton acceptor.

It belongs to the thymidine kinase family. In terms of assembly, homotetramer.

The protein localises to the cytoplasm. The catalysed reaction is thymidine + ATP = dTMP + ADP + H(+). The polypeptide is Thymidine kinase (Deinococcus radiodurans (strain ATCC 13939 / DSM 20539 / JCM 16871 / CCUG 27074 / LMG 4051 / NBRC 15346 / NCIMB 9279 / VKM B-1422 / R1)).